Reading from the N-terminus, the 294-residue chain is MTKKVFDDISRLALKALLYEVSLSPKPGLVDQLDNGAHDDMSFLTFVDSALALAPFFKTYLDIGFYHAKEDPGLIFERLRVSGIEAEQAMFSATKGVNTHKGVNFSLALLLGATGMYLASQPQLLAHVTAFTEEDSLAICQLVKPLTAHLLETDFGSLDLKKELTYGEKLFLDYGIKGPRGEASEGYPTIAHKALPFLRKSLRSTDQETAQLQLLVYLMSIVEDGNLIHRGGIKAWQRVKQDMRLLHNSALSATDLKAALSAYNDKLIQQHLSPGGTADLLVLSLYFAFLENQL.

It belongs to the CitG/MdcB family.

It carries out the reaction 3'-dephospho-CoA + ATP = 2'-(5''-triphospho-alpha-D-ribosyl)-3'-dephospho-CoA + adenine. This Streptococcus equi subsp. zooepidemicus (strain MGCS10565) protein is Probable 2-(5''-triphosphoribosyl)-3'-dephosphocoenzyme-A synthase.